Here is a 363-residue protein sequence, read N- to C-terminus: Adenosine deaminase (363 aa).

A2 bears the N-acetylalanine mark. The Zn(2+) site is built by H15 and H17. Substrate is bound by residues H17 and D19. K54 is subject to N6-acetyllysine. G184 contacts substrate. H214 is a binding site for Zn(2+). Catalysis depends on E217, which acts as the Proton donor. K232 is modified (N6-acetyllysine). D295 provides a ligand contact to Zn(2+). D296 serves as a coordination point for substrate.

This sequence belongs to the metallo-dependent hydrolases superfamily. Adenosine and AMP deaminases family. In terms of assembly, interacts with DPP4 (via extracellular domain). Interacts with PLG (via Kringle 4 domain); the interaction stimulates PLG activation when in complex with DPP4. The cofactor is Zn(2+). As to expression, expressed in gastrointestinal tissues (at protein level).

It localises to the cell membrane. The protein localises to the cell junction. Its subcellular location is the cytoplasmic vesicle lumen. It is found in the cytoplasm. The protein resides in the lysosome. The enzyme catalyses adenosine + H2O + H(+) = inosine + NH4(+). It carries out the reaction 2'-deoxyadenosine + H2O + H(+) = 2'-deoxyinosine + NH4(+). The catalysed reaction is cordycepin + H2O + H(+) = 3'-deoxyinosine + NH4(+). Functionally, catalyzes the hydrolytic deamination of adenosine and 2-deoxyadenosine. Plays an important role in purine metabolism and in adenosine homeostasis. Modulates signaling by extracellular adenosine, and so contributes indirectly to cellular signaling events. Acts as a positive regulator of T-cell coactivation, by binding DPP4. Its interaction with DPP4 regulates lymphocyte-epithelial cell adhesion. Enhances dendritic cell immunogenicity by affecting dendritic cell costimulatory molecule expression and cytokines and chemokines secretion. Enhances CD4+ T-cell differentiation and proliferation. Acts as a positive modulator of adenosine receptors ADORA1 and ADORA2A, by enhancing their ligand affinity via conformational change. Stimulates plasminogen activation. Plays a role in male fertility. Plays a protective role in early postimplantation embryonic development. Also responsible for the deamination of cordycepin (3'-deoxyadenosine), a fungal natural product that shows antitumor, antibacterial, antifungal, antivirus, and immune regulation properties. This is Adenosine deaminase (ADA) from Bos taurus (Bovine).